The sequence spans 50 residues: F420-non-reducing hydrogenase vhu subunit U (50 aa).

Residues Sec27 and Cys30 each coordinate Ni(2+). Residue Sec27 is a non-standard amino acid, selenocysteine. The propeptide at 34-50 (IIVKDEKGNKIIEVIKE) is removed in mature form.

Belongs to the [NiFe]/[NiFeSe] hydrogenase large subunit family. As to quaternary structure, the F420-non-reducing hydrogenase vhu is composed of four subunits; VhuA, VhuD, VhuG and VhuU. It depends on Ni(2+) as a cofactor.

This is F420-non-reducing hydrogenase vhu subunit U (vhuU) from Methanocaldococcus jannaschii (strain ATCC 43067 / DSM 2661 / JAL-1 / JCM 10045 / NBRC 100440) (Methanococcus jannaschii).